Here is a 571-residue protein sequence, read N- to C-terminus: Urease subunit alpha (571 aa).

The Urease domain occupies 133-571; that stretch reads GGIDTHVHFI…LPLAQRYFLF (439 aa). 3 residues coordinate Ni(2+): histidine 138, histidine 140, and lysine 221. Lysine 221 is modified (N6-carboxylysine). Histidine 223 provides a ligand contact to substrate. Histidine 250 and histidine 276 together coordinate Ni(2+). Histidine 324 serves as the catalytic Proton donor. Aspartate 364 contributes to the Ni(2+) binding site.

It belongs to the metallo-dependent hydrolases superfamily. Urease alpha subunit family. Heterotrimer of UreA (gamma), UreB (beta) and UreC (alpha) subunits. Three heterotrimers associate to form the active enzyme. Ni cation is required as a cofactor. In terms of processing, carboxylation allows a single lysine to coordinate two nickel ions.

The protein localises to the cytoplasm. It carries out the reaction urea + 2 H2O + H(+) = hydrogencarbonate + 2 NH4(+). The protein operates within nitrogen metabolism; urea degradation; CO(2) and NH(3) from urea (urease route): step 1/1. The sequence is that of Urease subunit alpha from Staphylococcus carnosus (strain TM300).